The chain runs to 20 residues: Collagenolytic protease 36 kDa C (20 aa).

The region spanning 1–20 (IVGGSEATSGQFPYQXSFQD) is the Peptidase S1 domain. Positions 1–20 (IVGGSEATSGQFPYQXSFQD) are disordered.

The protein belongs to the peptidase S1 family.

It carries out the reaction Hydrolysis of proteins, with broad specificity for peptide bonds. Native collagen is cleaved about 75% of the length of the molecule from the N-terminus. Low activity on small molecule substrates of both trypsin and chymotrypsin.. This enzyme is a serine protease capable of degrading the native triple helix of collagen. The protein is Collagenolytic protease 36 kDa C of Paralithodes camtschaticus (Red king crab).